The sequence spans 555 residues: Glutamine--tRNA ligase (555 aa).

A 'HIGH' region motif is present at residues Pro-34 to His-44. Residues Glu-35–Asn-37 and His-41–Ser-47 each bind ATP. L-glutamine contacts are provided by Asp-67 and Tyr-212. Residues Thr-231, Arg-261–Leu-262, and Met-269–Lys-271 each bind ATP. Positions Ile-268 to Arg-272 match the 'KMSKS' region motif.

The protein belongs to the class-I aminoacyl-tRNA synthetase family. Monomer.

It localises to the cytoplasm. It carries out the reaction tRNA(Gln) + L-glutamine + ATP = L-glutaminyl-tRNA(Gln) + AMP + diphosphate. In Yersinia pseudotuberculosis serotype O:1b (strain IP 31758), this protein is Glutamine--tRNA ligase.